We begin with the raw amino-acid sequence, 202 residues long: Glycerol-3-phosphate acyltransferase (202 aa).

4 consecutive transmembrane segments (helical) span residues alanine 2–valine 22, leucine 85–alanine 105, alanine 119–phenylalanine 139, and valine 158–isoleucine 178.

Belongs to the PlsY family. In terms of assembly, probably interacts with PlsX.

It is found in the cell inner membrane. The catalysed reaction is an acyl phosphate + sn-glycerol 3-phosphate = a 1-acyl-sn-glycero-3-phosphate + phosphate. The protein operates within lipid metabolism; phospholipid metabolism. Functionally, catalyzes the transfer of an acyl group from acyl-phosphate (acyl-PO(4)) to glycerol-3-phosphate (G3P) to form lysophosphatidic acid (LPA). This enzyme utilizes acyl-phosphate as fatty acyl donor, but not acyl-CoA or acyl-ACP. This chain is Glycerol-3-phosphate acyltransferase, found in Cupriavidus pinatubonensis (strain JMP 134 / LMG 1197) (Cupriavidus necator (strain JMP 134)).